The following is a 123-amino-acid chain: Small ribosomal subunit protein uS12c (123 aa).

It belongs to the universal ribosomal protein uS12 family. In terms of assembly, part of the 30S ribosomal subunit.

Its subcellular location is the plastid. It localises to the chloroplast. Functionally, with S4 and S5 plays an important role in translational accuracy. Located at the interface of the 30S and 50S subunits. In Chaetosphaeridium globosum (Charophycean green alga), this protein is Small ribosomal subunit protein uS12c (rps12).